A 490-amino-acid chain; its full sequence is Cytochrome P450 2C55 (490 aa).

Cys-435 serves as a coordination point for heme.

The protein belongs to the cytochrome P450 family. The cofactor is heme.

It localises to the endoplasmic reticulum membrane. The protein resides in the microsome membrane. It catalyses the reaction an organic molecule + reduced [NADPH--hemoprotein reductase] + O2 = an alcohol + oxidized [NADPH--hemoprotein reductase] + H2O + H(+). In terms of biological role, metabolizes arachidonic acid mainly to 19-hydroxyeicosatetraenoic acid (HETE). This chain is Cytochrome P450 2C55 (Cyp2c55), found in Rattus norvegicus (Rat).